The chain runs to 101 residues: Putative pterin-4-alpha-carbinolamine dehydratase (101 aa).

Belongs to the pterin-4-alpha-carbinolamine dehydratase family.

It catalyses the reaction (4aS,6R)-4a-hydroxy-L-erythro-5,6,7,8-tetrahydrobiopterin = (6R)-L-erythro-6,7-dihydrobiopterin + H2O. This chain is Putative pterin-4-alpha-carbinolamine dehydratase, found in Rhizobium johnstonii (strain DSM 114642 / LMG 32736 / 3841) (Rhizobium leguminosarum bv. viciae).